The primary structure comprises 313 residues: MAALRDTYNDPVHIAVIGGTGLRELPHFTQVASLNITTPWGPPSSPITILHHTCSTSGKVVPVAFLSRHGLHHEYAPHEVPARANIAALRSIGVRSIVAFSAVGSLQEAIKPRDFVVPDQVIDRTKGVRPWTFFEGGAVAHVGFADPFDEQMAKVVRACGHSLEGDGVVLHDRGTLICMEGPQFSTRAESNLYRSWGGSIINMSCIPEAKLAREAEIAYQMICMSTDYDCWHSEAADVTVDMVMANMKMNSVNARNFIGAVLDELTKDEHAALVQAKHLEGTCKFGLSTSPGYLSAEALTKLSWLFPGYFSNN.

Phosphate is bound by residues threonine 20, arginine 68–histidine 69, and serine 101–alanine 102. Substrate is bound at residue methionine 203. Serine 204 is a binding site for phosphate. Aspartate 227–aspartate 229 contributes to the substrate binding site.

This sequence belongs to the PNP/MTAP phosphorylase family. MTAP subfamily. In terms of assembly, homotrimer.

It localises to the cytoplasm. The protein localises to the nucleus. It catalyses the reaction S-methyl-5'-thioadenosine + phosphate = 5-(methylsulfanyl)-alpha-D-ribose 1-phosphate + adenine. It functions in the pathway amino-acid biosynthesis; L-methionine biosynthesis via salvage pathway; S-methyl-5-thio-alpha-D-ribose 1-phosphate from S-methyl-5'-thioadenosine (phosphorylase route): step 1/1. Its function is as follows. Catalyzes the reversible phosphorylation of S-methyl-5'-thioadenosine (MTA) to adenine and 5-methylthioribose-1-phosphate. Involved in the breakdown of MTA, a major by-product of polyamine biosynthesis. Responsible for the first step in the methionine salvage pathway after MTA has been generated from S-adenosylmethionine. Has broad substrate specificity with 6-aminopurine nucleosides as preferred substrates. The sequence is that of S-methyl-5'-thioadenosine phosphorylase from Ajellomyces capsulatus (strain G186AR / H82 / ATCC MYA-2454 / RMSCC 2432) (Darling's disease fungus).